The chain runs to 377 residues: Succinyl-diaminopimelate desuccinylase (377 aa).

His68 serves as a coordination point for Zn(2+). Asp70 is a catalytic residue. A Zn(2+)-binding site is contributed by Asp101. Residue Glu135 is the Proton acceptor of the active site. Glu136, Glu164, and His350 together coordinate Zn(2+).

The protein belongs to the peptidase M20A family. DapE subfamily. Homodimer. The cofactor is Zn(2+). It depends on Co(2+) as a cofactor.

It carries out the reaction N-succinyl-(2S,6S)-2,6-diaminopimelate + H2O = (2S,6S)-2,6-diaminopimelate + succinate. It functions in the pathway amino-acid biosynthesis; L-lysine biosynthesis via DAP pathway; LL-2,6-diaminopimelate from (S)-tetrahydrodipicolinate (succinylase route): step 3/3. Its function is as follows. Catalyzes the hydrolysis of N-succinyl-L,L-diaminopimelic acid (SDAP), forming succinate and LL-2,6-diaminopimelate (DAP), an intermediate involved in the bacterial biosynthesis of lysine and meso-diaminopimelic acid, an essential component of bacterial cell walls. The protein is Succinyl-diaminopimelate desuccinylase of Vibrio vulnificus (strain CMCP6).